Reading from the N-terminus, the 98-residue chain is NADH-ubiquinone oxidoreductase chain 4L (98 aa).

The next 3 helical transmembrane spans lie at 1–21 (MASI…GVLI), 28–48 (STLL…TLLI), and 61–81 (LILL…LVTI).

The protein belongs to the complex I subunit 4L family. In terms of assembly, core subunit of respiratory chain NADH dehydrogenase (Complex I) which is composed of 45 different subunits.

The protein localises to the mitochondrion inner membrane. It catalyses the reaction a ubiquinone + NADH + 5 H(+)(in) = a ubiquinol + NAD(+) + 4 H(+)(out). In terms of biological role, core subunit of the mitochondrial membrane respiratory chain NADH dehydrogenase (Complex I) which catalyzes electron transfer from NADH through the respiratory chain, using ubiquinone as an electron acceptor. Part of the enzyme membrane arm which is embedded in the lipid bilayer and involved in proton translocation. This chain is NADH-ubiquinone oxidoreductase chain 4L (MT-ND4L), found in Thylamys elegans (Elegant fat-tailed mouse opossum).